Here is a 603-residue protein sequence, read N- to C-terminus: MNHFPKLLSSQIGFDVAQTILENFDRHYRIFREAAVEAKDLFERADWHGLQRLARERITSYDDRVRECVELLEDEYDAENIDNEVWPQIKLHYIGLLTSHRQPECAETFFNSVCCKILHRAYFNNDFIFVRPAISTEYIENDEPAAKPTYRAYYPGSEGLAATLERIVTNFQLNPPFEDLERDIACIMQAIHDEFGAFDEAVNFQIHVLSSLFYRNKTAYVVGRIINGDRVLPFAVPIRHARAGILALDTVLLRRDQLKIIFSFSHSYFLVDMNVPSAYVQFLRSIMPGKPKAEIYTSVGLQKQGKNLFYRDLLHHLSHSSDRFIVAPGIKGLVMLVFTLPSFPYVFKMIKDHFPPPKDTTREQIMAKYLLVKRHDRLGRMADTLEYSSVALPLARLDDALVRELEKEVPSLIEYEGENLVIKHLYIERRMVPLNLYLQNGSDAEIEHGVREYGNAVKELMQANIFPGDMLYKNFGVTRHGRVVFYDYDEIEYLTDCNVRRVPPPRNDEDEMSGEPWYTVGPHDIFPETYAPFLLGDPRVREHFLAHHADFFDPQLWQDSKDRLLRGELPDFFAYEPALRFCIRYPERFAPGDAADGGKLAAA.

ATP is bound by residues 327 to 333 (APGIKGL) and Lys-348. The active site involves Asp-383.

This sequence belongs to the AceK family.

It localises to the cytoplasm. It carries out the reaction L-seryl-[isocitrate dehydrogenase] + ATP = O-phospho-L-seryl-[isocitrate dehydrogenase] + ADP + H(+). Bifunctional enzyme which can phosphorylate or dephosphorylate isocitrate dehydrogenase (IDH) on a specific serine residue. This is a regulatory mechanism which enables bacteria to bypass the Krebs cycle via the glyoxylate shunt in response to the source of carbon. When bacteria are grown on glucose, IDH is fully active and unphosphorylated, but when grown on acetate or ethanol, the activity of IDH declines drastically concomitant with its phosphorylation. The sequence is that of Isocitrate dehydrogenase kinase/phosphatase from Burkholderia mallei (strain ATCC 23344).